Consider the following 748-residue polypeptide: 5-methyltetrahydropteroyltriglutamate--homocysteine methyltransferase (748 aa).

Residues 18–21 (REWK) and Lys-112 contribute to the 5-methyltetrahydropteroyltri-L-glutamate site. Residues 420-422 (IGS) and Glu-473 contribute to the L-homocysteine site. Residues 420 to 422 (IGS) and Glu-473 each bind L-methionine. Trp-550 provides a ligand contact to 5-methyltetrahydropteroyltri-L-glutamate. Asp-588 provides a ligand contact to L-homocysteine. An L-methionine-binding site is contributed by Asp-588. Residue Glu-594 participates in 5-methyltetrahydropteroyltri-L-glutamate binding. Zn(2+)-binding residues include His-630, Cys-632, and Glu-654. The active-site Proton donor is the His-683. Residue Cys-715 coordinates Zn(2+).

This sequence belongs to the vitamin-B12 independent methionine synthase family. Zn(2+) is required as a cofactor.

It carries out the reaction 5-methyltetrahydropteroyltri-L-glutamate + L-homocysteine = tetrahydropteroyltri-L-glutamate + L-methionine. It participates in amino-acid biosynthesis; L-methionine biosynthesis via de novo pathway; L-methionine from L-homocysteine (MetE route): step 1/1. Functionally, catalyzes the transfer of a methyl group from 5-methyltetrahydrofolate to homocysteine resulting in methionine formation. This chain is 5-methyltetrahydropteroyltriglutamate--homocysteine methyltransferase, found in Staphylococcus epidermidis (strain ATCC 12228 / FDA PCI 1200).